We begin with the raw amino-acid sequence, 523 residues long: FAD-dependent monooxygenase drtC (523 aa).

Positions 77–252 (TSLNSACIVL…TNFEVRAFPQ (176 aa)) constitute an FAD-binding PCMH-type domain.

Belongs to the oxygen-dependent FAD-linked oxidoreductase family. FAD is required as a cofactor.

Its pathway is secondary metabolite biosynthesis; terpenoid biosynthesis. Its function is as follows. FAD-dependent monooxygenase; part of the gene cluster that mediates the biosynthesis of various drimane-type sesquiterpene esters, compounds that exhibit diverse biological activities and are widely present in eukaryotes. The pathway begins with the synthesis of the backbone drimenol by the terpene cyclase drtB using farnesyl pyrophosphate (FPP) as substrate. The cytochrome P450 monooxygenase drtD is then responsible for the hydroxylations at C-6, C-9 and C-12, as well as the oxidation of hydroxyl groups at C-6 and C-11 to a ketone and an aldehyde, respectively. Then, the biosynthesis can go in two directions, either the hydroxylated drimenol is further hydroxylated at C-2 and C-3 by an enzyme(s) not associated with the drt cluster, or the FAD-binding oxidoreductase drtC further oxidizes C-11 or C-12 to form the butyrolactone ring. DrtB, drtD and drtC are solely responsible for the formation of the different drimane structures observed during drimane sesquiterpenes biosynthesis. The polyketide synthase drtA synthesizes different lengths (C6 and C8) of PKS chains, which are then oxidized to varying degrees by the short-chain dehydrogenase drtF. Finally, these PKS chains are transferred onto drimane sesquiterpenes by the acyltransferase drtE, forming the sesquiterpene esters. In addition to the different fatty acyl-CoA chains produced by drtA, drtE is also able to use cinnamoyl-CoA as a substrate. The protein is FAD-dependent monooxygenase drtC of Aspergillus calidoustus.